The chain runs to 442 residues: CBL-interacting serine/threonine-protein kinase 14 (442 aa).

Positions 22-276 (YEVGKLVGCG…IEEIIHDPWF (255 aa)) constitute a Protein kinase domain. ATP contacts are provided by residues 28-36 (VGCGAFAKV) and Lys-51. Asp-144 (proton acceptor) is an active-site residue. The activation loop stretch occupies residues 162-191 (DFGLSALTDQIRPDGLLHTLCGTPAYVAPE). The residue at position 166 (Ser-166) is a Phosphoserine. At Thr-180 the chain carries Phosphothreonine. In terms of domain architecture, NAF spans 305 to 329 (MGARRMNAFDIISGSPGFNLSGLFG). Positions 335–365 (DRVERFVSAWTAERVVERLEEIVSAENLTVA) are PPI.

Belongs to the protein kinase superfamily. CAMK Ser/Thr protein kinase family. SNF1 subfamily. As to quaternary structure, interacts with CBL2. Interacts with CBL3. Interacts with CBL8. Interacts with CBL9. Interacts with KIN10 and KIN11. Mn(2+) serves as cofactor. In terms of tissue distribution, predominant in roots, cauline leaves, and flowers. Ubiquitous with highest expression in 7-day-old seedlings and flower buds, followed by that in cauline leaves and young siliques.

The protein localises to the cytoplasm. It localises to the nucleus. It carries out the reaction L-seryl-[protein] + ATP = O-phospho-L-seryl-[protein] + ADP + H(+). The catalysed reaction is L-threonyl-[protein] + ATP = O-phospho-L-threonyl-[protein] + ADP + H(+). CIPK serine-threonine protein kinases interact with CBL proteins. Binding of a CBL protein to the regulatory NAF domain of CIPK protein lead to the activation of the kinase in a calcium-dependent manner. The protein is CBL-interacting serine/threonine-protein kinase 14 (CIPK14) of Arabidopsis thaliana (Mouse-ear cress).